The chain runs to 218 residues: N-(5'-phosphoribosyl)anthranilate isomerase (218 aa).

The protein belongs to the TrpF family.

The catalysed reaction is N-(5-phospho-beta-D-ribosyl)anthranilate = 1-(2-carboxyphenylamino)-1-deoxy-D-ribulose 5-phosphate. It functions in the pathway amino-acid biosynthesis; L-tryptophan biosynthesis; L-tryptophan from chorismate: step 3/5. In Stenotrophomonas maltophilia (strain R551-3), this protein is N-(5'-phosphoribosyl)anthranilate isomerase.